We begin with the raw amino-acid sequence, 300 residues long: Delta(7)-sterol 5(6)-desaturase erg31 (300 aa).

A run of 3 helical transmembrane segments spans residues 33 to 53 (ISLF…FASL), 78 to 98 (VLTA…WFLA), and 117 to 137 (YFLC…YWAH). The 126-residue stretch at 123–248 (PLFVMFSDFG…FTTLFDRLGN (126 aa)) folds into the Fatty acid hydroxylase domain. The short motif at 137-141 (HRFLH) is the Histidine box-1 element. Residues 150 to 154 (HKLHH) carry the Histidine box-2 motif. The helical transmembrane segment at 180–200 (HLFPFFFPLHKLTYLALFTFV) threads the bilayer. Positions 225–229 (HNGHH) match the Histidine box-3 motif.

It belongs to the sterol desaturase family. Fe cation is required as a cofactor.

It localises to the endoplasmic reticulum membrane. The enzyme catalyses episterol + 2 Fe(II)-[cytochrome b5] + O2 + 2 H(+) = 5-dehydroepisterol + 2 Fe(III)-[cytochrome b5] + 2 H2O. It participates in steroid metabolism; ergosterol biosynthesis. Functionally, C-5 sterol desaturase; part of the third module of ergosterol biosynthesis pathway that includes by the late steps of the pathway. Erg31 and erg32 catalyze the introduction of a C-5 double bond in the B ring to produce 5-dehydroepisterol. The third module or late pathway involves the ergosterol synthesis itself through consecutive reactions that mainly occur in the endoplasmic reticulum (ER) membrane. Firstly, the squalene synthase erg9 catalyzes the condensation of 2 farnesyl pyrophosphate moieties to form squalene, which is the precursor of all steroids. Secondly, squalene is converted into lanosterol by the consecutive action of the squalene epoxidase erg1 and the lanosterol synthase erg7. The lanosterol 14-alpha-demethylase erg11/cyp1 catalyzes C14-demethylation of lanosterol to produce 4,4'-dimethyl cholesta-8,14,24-triene-3-beta-ol. In the next steps, a complex process involving various demethylation, reduction and desaturation reactions catalyzed by the C-14 reductase erg24 and the C-4 demethylation complex erg25-erg26-erg27 leads to the production of zymosterol. Erg28 likely functions in the C-4 demethylation complex reaction by tethering erg26 and Erg27 to the endoplasmic reticulum or to facilitate interaction between these proteins. Then, the sterol 24-C-methyltransferase erg6 catalyzes the methyl transfer from S-adenosyl-methionine to the C-24 of zymosterol to form fecosterol. The C-8 sterol isomerase erg2 catalyzes the reaction which results in unsaturation at C-7 in the B ring of sterols and thus converts fecosterol to episterol. The sterol-C5-desaturases erg31 and erg32 then catalyze the introduction of a C-5 double bond in the B ring to produce 5-dehydroepisterol. The C-22 sterol desaturase erg5 further converts 5-dehydroepisterol into ergosta-5,7,22,24(28)-tetraen-3beta-ol by forming the C-22(23) double bond in the sterol side chain. Finally, ergosta-5,7,22,24(28)-tetraen-3beta-ol is substrate of the C-24(28) sterol reductase erg4 to produce ergosterol. In the genus Schizosaccharomyces, a second route exists between lanosterol and fecosterol, via the methylation of lanosterol to eburicol by erg6, followed by C14-demethylation by erg11/cyp1 and C4-demethylation by the demethylation complex erg25-erg26-erg27. The sequence is that of Delta(7)-sterol 5(6)-desaturase erg31 from Schizosaccharomyces pombe (strain 972 / ATCC 24843) (Fission yeast).